A 124-amino-acid polypeptide reads, in one-letter code: Holo-[acyl-carrier-protein] synthase (124 aa).

Mg(2+) is bound by residues Asp8 and Glu58.

This sequence belongs to the P-Pant transferase superfamily. AcpS family. The cofactor is Mg(2+).

It localises to the cytoplasm. It catalyses the reaction apo-[ACP] + CoA = holo-[ACP] + adenosine 3',5'-bisphosphate + H(+). Its function is as follows. Transfers the 4'-phosphopantetheine moiety from coenzyme A to a Ser of acyl-carrier-protein. This is Holo-[acyl-carrier-protein] synthase from Lacticaseibacillus casei (strain BL23) (Lactobacillus casei).